The primary structure comprises 131 residues: Putative superoxide reductase (131 aa).

6 residues coordinate Fe cation: Glu-15, His-17, His-45, His-51, Cys-115, and His-118.

This sequence belongs to the desulfoferrodoxin family. It depends on Fe cation as a cofactor.

The catalysed reaction is reduced [rubredoxin] + superoxide + 2 H(+) = oxidized [rubredoxin] + H2O2. Its function is as follows. Uses electrons from reduced NADP, by way of rubredoxin and an oxidoreductase, to catalyze the reduction of superoxide to hydrogen peroxide. This chain is Putative superoxide reductase, found in Thermotoga maritima (strain ATCC 43589 / DSM 3109 / JCM 10099 / NBRC 100826 / MSB8).